Here is a 129-residue protein sequence, read N- to C-terminus: D-ribose pyranase (129 aa).

Histidine 20 (proton donor) is an active-site residue. Substrate is bound by residues aspartate 28, histidine 96, and tyrosine 118–asparagine 120.

It belongs to the RbsD / FucU family. RbsD subfamily. Homodecamer.

It is found in the cytoplasm. It catalyses the reaction beta-D-ribopyranose = beta-D-ribofuranose. It functions in the pathway carbohydrate metabolism; D-ribose degradation; D-ribose 5-phosphate from beta-D-ribopyranose: step 1/2. Its function is as follows. Catalyzes the interconversion of beta-pyran and beta-furan forms of D-ribose. The polypeptide is D-ribose pyranase (Shouchella clausii (strain KSM-K16) (Alkalihalobacillus clausii)).